A 491-amino-acid polypeptide reads, in one-letter code: MQFSTFQQDLNTWQGSSLIFGIVEEDLKNQLQKINFIIDSKLLLEKINQKKFNGEKGKILNFDFFDQRLQTLKIIGLGESKNINSNDIKNSLADVIRKSSDKEEKISILFPWELINSPEEIQSFGESARLSAYKDNRFNSKRDDKKVLNEIEFLNLNKFKNINFNETEYICEGVELARRLVAAPPNSLTPLEMSIQASKIAKDHGLEIKILEKNECEDLGMGAYLAVAKGSDLEPKFIHLTLKSTSPVKEKIALVGKGLTFDSGGYNLKVGASQIEMMKYDMGGSAAVLGAAKALGAIKPDGLEIHFIVAACENMINGSAVHPGDVIKASNGKTIEINNTDAEGRLTLADALTYASNLKPDSIIDLATLTGAIVVALGNDVAGFWTNNNMMASDLKTASSQAGEELWQMPLQKSYKDGLKSHIADMKNTGPRAGGSITAALFLEEFFDKNIKWAHIDIAGTCWTDKNRGIHPSGATGYGVKTLVQWIKNKR.

2 residues coordinate Mn(2+): Lys-257 and Asp-262. Lys-269 is an active-site residue. 3 residues coordinate Mn(2+): Asp-281, Asp-341, and Glu-343. Arg-345 is a catalytic residue.

Belongs to the peptidase M17 family. Mn(2+) serves as cofactor.

It localises to the cytoplasm. The catalysed reaction is Release of an N-terminal amino acid, Xaa-|-Yaa-, in which Xaa is preferably Leu, but may be other amino acids including Pro although not Arg or Lys, and Yaa may be Pro. Amino acid amides and methyl esters are also readily hydrolyzed, but rates on arylamides are exceedingly low.. The enzyme catalyses Release of an N-terminal amino acid, preferentially leucine, but not glutamic or aspartic acids.. Presumably involved in the processing and regular turnover of intracellular proteins. Catalyzes the removal of unsubstituted N-terminal amino acids from various peptides. The sequence is that of Probable cytosol aminopeptidase from Prochlorococcus marinus subsp. pastoris (strain CCMP1986 / NIES-2087 / MED4).